The following is a 349-amino-acid chain: Draxin (349 aa).

The N-terminal stretch at Met-1–Ala-25 is a signal peptide. Disordered stretches follow at residues Pro-38–Ala-79, Pro-118–Arg-145, and Asp-244–Pro-273. Positions Pro-120–Arg-131 are enriched in basic and acidic residues. Basic residues-rich tracts occupy residues Thr-132–Arg-145 and Ala-249–Lys-258. Asn-264 carries an N-linked (GlcNAc...) asparagine glycan.

It belongs to the draxin family. As to quaternary structure, interacts with LRP6.

It is found in the secreted. In terms of biological role, chemorepulsive axon guidance protein required for the development of spinal cord and forebrain commissures. Acts as a chemorepulsive guidance protein for commissural axons during development. Able to inhibit or repel neurite outgrowth from dorsal spinal cord. Inhibits the stabilization of cytosolic beta-catenin (CTNNB1) via its interaction with LRP6, thereby acting as an antagonist of Wnt signaling pathway. The chain is Draxin from Homo sapiens (Human).